The sequence spans 348 residues: Dihydroorotase (348 aa).

H17 and H19 together coordinate Zn(2+). Residues 19–21 (HLR) and N45 each bind substrate. 3 residues coordinate Zn(2+): K103, H140, and H178. Position 103 is an N6-carboxylysine (K103). Substrate is bound at residue H140. L223 contacts substrate. Residue D251 coordinates Zn(2+). D251 is an active-site residue. Substrate contacts are provided by H255 and A267.

This sequence belongs to the metallo-dependent hydrolases superfamily. DHOase family. Class II DHOase subfamily. Homodimer. Requires Zn(2+) as cofactor.

The catalysed reaction is (S)-dihydroorotate + H2O = N-carbamoyl-L-aspartate + H(+). It participates in pyrimidine metabolism; UMP biosynthesis via de novo pathway; (S)-dihydroorotate from bicarbonate: step 3/3. In terms of biological role, catalyzes the reversible cyclization of carbamoyl aspartate to dihydroorotate. The protein is Dihydroorotase of Enterobacter sp. (strain 638).